A 314-amino-acid chain; its full sequence is tRNA dimethylallyltransferase 2 (314 aa).

Residue 8 to 15 (GPTGSGKS) participates in ATP binding. 10–15 (TGSGKS) lines the substrate pocket.

It belongs to the IPP transferase family. Monomer. Mg(2+) is required as a cofactor.

The catalysed reaction is adenosine(37) in tRNA + dimethylallyl diphosphate = N(6)-dimethylallyladenosine(37) in tRNA + diphosphate. Its function is as follows. Catalyzes the transfer of a dimethylallyl group onto the adenine at position 37 in tRNAs that read codons beginning with uridine, leading to the formation of N6-(dimethylallyl)adenosine (i(6)A). This Mycobacterium marinum (strain ATCC BAA-535 / M) protein is tRNA dimethylallyltransferase 2.